Consider the following 168-residue polypeptide: DOMON domain-containing protein Y73F4A.2 (168 aa).

The first 18 residues, Met-1–Ala-18, serve as a signal peptide directing secretion. In terms of domain architecture, DOMON spans Ser-26–Gly-143. An N-linked (GlcNAc...) asparagine glycan is attached at Asn-36. The disordered stretch occupies residues Gly-148–Asn-168. Basic and acidic residues predominate over residues Arg-152–Asn-168.

It localises to the secreted. This chain is DOMON domain-containing protein Y73F4A.2, found in Caenorhabditis elegans.